We begin with the raw amino-acid sequence, 82 residues long: Cyclin-dependent protein kinase inhibitor SMR5 (82 aa).

A disordered region spans residues 1-26 (MEEKNYDDGDTVTVDDDYQMGCTTPT). A compositionally biased stretch (acidic residues) spans 8–18 (DGDTVTVDDDY).

As to quaternary structure, interacts with CDKA-1 and D-type cyclins. In terms of tissue distribution, expressed in columella cells in the roots and in root meristems after induction.

Probable cyclin-dependent protein kinase (CDK) inhibitor that functions as a repressor of mitosis in the endoreduplication cell cycle. Acts as a potent cell cycle inhibitor, regulating a hydroxyurea-dependent checkpoint in leaves. Essential to activate a high-light-dependent cell cycle checkpoint. The sequence is that of Cyclin-dependent protein kinase inhibitor SMR5 from Arabidopsis thaliana (Mouse-ear cress).